A 790-amino-acid chain; its full sequence is DNA topoisomerase 1 (790 aa).

3 stretches are compositionally biased toward polar residues: residues 1-18, 44-54, and 61-70; these read MKSN…SNVM, KLSSGALNGNS, and SNLSCPSPYT. A disordered region spans residues 1–196; sequence MKSNPGITVI…KKRPDVSASV (196 aa). Residues 158–167 show a composition bias toward acidic residues; that stretch reads QEEAAADDDP. Residues 168–181 show a composition bias toward polar residues; the sequence is SISNRNKKSTTPAS. Interaction with DNA stretches follow at residues 426 to 427, 490 to 495, and 581 to 583; these read KY, RAGNEK, and TAK. A Topo IB-type catalytic domain is found at 433–790; it reads SSSLKGKVTR…AMDVVLIFRF (358 aa). Catalysis depends on Y749, which acts as the O-(3'-phospho-DNA)-tyrosine intermediate.

It belongs to the type IB topoisomerase family.

It localises to the nucleus. The enzyme catalyses ATP-independent breakage of single-stranded DNA, followed by passage and rejoining.. Releases the supercoiling and torsional tension of DNA introduced during the DNA replication and transcription by transiently cleaving and rejoining one strand of the DNA duplex. Introduces a single-strand break via transesterification at a target site in duplex DNA. The scissile phosphodiester is attacked by the catalytic tyrosine of the enzyme, resulting in the formation of a DNA-(3'-phosphotyrosyl)-enzyme intermediate and the expulsion of a 5'-OH DNA strand. The free DNA strand then rotates around the intact phosphodiester bond on the opposing strand, thus removing DNA supercoils. Finally, in the religation step, the DNA 5'-OH attacks the covalent intermediate to expel the active-site tyrosine and restore the DNA phosphodiester backbone. The polypeptide is DNA topoisomerase 1 (TOP1) (Daucus carota (Wild carrot)).